The following is a 189-amino-acid chain: uncharacterized protein (189 aa).

This sequence belongs to the flavoredoxin family. FMN is required as a cofactor.

This is an uncharacterized protein from Escherichia coli (strain K12).